The chain runs to 226 residues: Cytidylate kinase (226 aa).

11 to 19 contributes to the ATP binding site; it reads GPAGAGKST.

Belongs to the cytidylate kinase family. Type 1 subfamily.

Its subcellular location is the cytoplasm. It carries out the reaction CMP + ATP = CDP + ADP. The catalysed reaction is dCMP + ATP = dCDP + ADP. The sequence is that of Cytidylate kinase from Pelotomaculum thermopropionicum (strain DSM 13744 / JCM 10971 / SI).